The primary structure comprises 525 residues: Zwittermicin A synthase ZmaJ (525 aa).

The protein belongs to the ATP-dependent AMP-binding enzyme family.

The catalysed reaction is holo-[peptidyl-carrier protein] + L-serine + ATP = L-seryl-[peptidyl-carrier protein] + AMP + diphosphate. It participates in antibiotic biosynthesis. Involved in the biosynthesis of the linear aminopolyol antibiotic zwittermicin A (ZmA). Specifically adenylates L-serine and loads it onto the holo form of ZmaH via a thioester linkage to the phosphopanthetheine moiety. The chain is Zwittermicin A synthase ZmaJ from Bacillus cereus.